Here is a 538-residue protein sequence, read N- to C-terminus: MSKGIKNSQLKKKNVKASNVAEKIEEKVEKTDKVVEKAAEVTEKRIRNLKLQEKVVTADVAADMIENGMIVAISGFTPSGYPKEVPKALTKKVNALEEEFKVTLYTGSSTGADIDGEWAKAGIIERRIPYQTNSDMRKKINDGSIKYADMHLSHMAQYINYSVIPKVDIAIIEAVAITEEGDIIPSTGIGNTATFVENADKVIVEINEAQPLELEGMADIYTLKNPPRREPIPIVNAGNRIGTTYVTCGSEKICAIVMTNTQDKTRPLTEVSPVSQAISDNLIGFLNKEVEEGKLPKNLLPIQSGVGSVANAVLAGLCESNFKNLSCYTEVIQDSMLKLIKCGKADVVSGTSISPSPEMLPEFIKDINFFREKIVLRPQEISNNPEIARRIGVISINTALEVDIYGNVNSTHVMGSKMMNGIGGSGDFARNAYLTIFTTESIAKKGDISSIVPMVSHVDHTEHDVMVIVTEQGVADLRGLSPREKAVAIIENCVHPDYKDMLMEYFEEACKSSGGNTPHNLEKALSWHTKFIKTGSMK.

305-309 (GVGSV) serves as a coordination point for CoA. Glutamate 330 functions as the 5-glutamyl coenzyme A thioester intermediate in the catalytic mechanism. Residues asparagine 420 and glycine 424 each coordinate CoA.

This sequence belongs to the acetyl-CoA hydrolase/transferase family.

The catalysed reaction is succinyl-CoA + acetate = succinate + acetyl-CoA. Forms succinyl-CoA from succinate and acetyl-CoA. The polypeptide is Succinyl-CoA:acetate CoA-transferase (Clostridium kluyveri (strain ATCC 8527 / DSM 555 / NBRC 12016 / NCIMB 10680 / K1)).